A 338-amino-acid chain; its full sequence is Short-chain dehydrogenase/reductase phmF (338 aa).

Positions 46, 71, 96, and 123 each coordinate NADP(+). Catalysis depends on Ser-177, which acts as the Proton donor. Residues Tyr-211 and Lys-215 each coordinate NADP(+). Residue Tyr-211 is the Proton acceptor of the active site. Catalysis depends on Lys-215, which acts as the Lowers pKa of active site Tyr.

It belongs to the short-chain dehydrogenases/reductases (SDR) family.

The protein operates within mycotoxin biosynthesis. Its function is as follows. Short-chain dehydrogenase/reductase; part of the gene cluster that mediates the biosynthesis of the mycotoxins phomacins, leucine-derived cytochalasans with potent actin polymerization-inhibitory activities and monocot-specific antigerminative activities. The first step in the pathway is catalyzed by the hybrid PKS-NRPS phmA, assisted by the enoyl reductase phmE, that are responsible for fusion of the leucine precursor and the polyketide backbone to produce a 2-pyrrolidone intermediate. The polyketide synthase module (PKS) of phmA is responsible for the synthesis of the polyketide backbone and the downstream nonribosomal peptide synthetase (NRPS) amidates the carboxyl end of the polyketide with the leucine precursor. Because phmA lacks a designated enoylreductase (ER) domain, the required activity is provided the enoyl reductase phmE. Reduction by the hydrolyase phmG, followed by dehydration and intra-molecular Diels-Alder cyclization by the Diels-Alderase phmD then yield the required isoindolone-fused macrocycle. A number of oxidative steps catalyzed by the tailoring cytochrome P450 monooxygenase phmB, the FAD-linked oxidoreductase phmC and the short-chain dehydrogenase/reductase phmF, are further required to afford the final products, phomacin D and phomacin E. The chain is Short-chain dehydrogenase/reductase phmF from Phaeosphaeria nodorum (strain SN15 / ATCC MYA-4574 / FGSC 10173) (Glume blotch fungus).